The primary structure comprises 429 residues: Glutamate-1-semialdehyde 2,1-aminomutase 1 (429 aa).

An N6-(pyridoxal phosphate)lysine modification is found at K268.

This sequence belongs to the class-III pyridoxal-phosphate-dependent aminotransferase family. HemL subfamily. In terms of assembly, homodimer. Pyridoxal 5'-phosphate is required as a cofactor.

It is found in the cytoplasm. It carries out the reaction (S)-4-amino-5-oxopentanoate = 5-aminolevulinate. It functions in the pathway porphyrin-containing compound metabolism; protoporphyrin-IX biosynthesis; 5-aminolevulinate from L-glutamyl-tRNA(Glu): step 2/2. This Staphylococcus saprophyticus subsp. saprophyticus (strain ATCC 15305 / DSM 20229 / NCIMB 8711 / NCTC 7292 / S-41) protein is Glutamate-1-semialdehyde 2,1-aminomutase 1.